Consider the following 150-residue polypeptide: D-aminoacyl-tRNA deacylase (150 aa).

The short motif at 140-141 (GP) is the Gly-cisPro motif, important for rejection of L-amino acids element.

It belongs to the DTD family. Homodimer.

Its subcellular location is the cytoplasm. It catalyses the reaction glycyl-tRNA(Ala) + H2O = tRNA(Ala) + glycine + H(+). It carries out the reaction a D-aminoacyl-tRNA + H2O = a tRNA + a D-alpha-amino acid + H(+). Functionally, an aminoacyl-tRNA editing enzyme that deacylates mischarged D-aminoacyl-tRNAs. Also deacylates mischarged glycyl-tRNA(Ala), protecting cells against glycine mischarging by AlaRS. Acts via tRNA-based rather than protein-based catalysis; rejects L-amino acids rather than detecting D-amino acids in the active site. By recycling D-aminoacyl-tRNA to D-amino acids and free tRNA molecules, this enzyme counteracts the toxicity associated with the formation of D-aminoacyl-tRNA entities in vivo and helps enforce protein L-homochirality. This is D-aminoacyl-tRNA deacylase (DTD1) from Eremothecium gossypii (strain ATCC 10895 / CBS 109.51 / FGSC 9923 / NRRL Y-1056) (Yeast).